Consider the following 271-residue polypeptide: Ribosomal RNA small subunit methyltransferase A (271 aa).

The S-adenosyl-L-methionine site is built by histidine 11, leucine 13, glycine 38, glutamate 58, aspartate 86, and asparagine 101.

It belongs to the class I-like SAM-binding methyltransferase superfamily. rRNA adenine N(6)-methyltransferase family. RsmA subfamily.

It is found in the cytoplasm. It catalyses the reaction adenosine(1518)/adenosine(1519) in 16S rRNA + 4 S-adenosyl-L-methionine = N(6)-dimethyladenosine(1518)/N(6)-dimethyladenosine(1519) in 16S rRNA + 4 S-adenosyl-L-homocysteine + 4 H(+). Specifically dimethylates two adjacent adenosines (A1518 and A1519) in the loop of a conserved hairpin near the 3'-end of 16S rRNA in the 30S particle. May play a critical role in biogenesis of 30S subunits. In Helicobacter pylori (strain J99 / ATCC 700824) (Campylobacter pylori J99), this protein is Ribosomal RNA small subunit methyltransferase A.